Consider the following 146-residue polypeptide: Large ribosomal subunit protein uL23B (146 aa).

The segment at Met-1–Ser-22 is disordered.

This sequence belongs to the universal ribosomal protein uL23 family.

Functionally, this protein binds to a specific region on the 26S rRNA. This Caenorhabditis elegans protein is Large ribosomal subunit protein uL23B (rpl-23A.2).